The chain runs to 511 residues: Glucans biosynthesis protein G (511 aa).

The signal sequence occupies residues 1–22 (MMKMRWLSAAVMLTLYTSSSWA).

It belongs to the OpgD/OpgG family.

The protein localises to the periplasm. The protein operates within glycan metabolism; osmoregulated periplasmic glucan (OPG) biosynthesis. Involved in the biosynthesis of osmoregulated periplasmic glucans (OPGs). The chain is Glucans biosynthesis protein G from Escherichia coli O8 (strain IAI1).